Here is a 269-residue protein sequence, read N- to C-terminus: Protein LNK3 (269 aa).

In terms of assembly, interacts with REV8.

Functionally, probable transcriptional coactivator. This Arabidopsis thaliana (Mouse-ear cress) protein is Protein LNK3.